An 88-amino-acid polypeptide reads, in one-letter code: Small ribosomal subunit protein bS20 (88 aa).

2 disordered regions span residues 1–25 (MPNIKSQIKRVKTNEKSRQRNKAVK) and 68–88 (HKNQAANRKSAISKKLNSLAA).

Belongs to the bacterial ribosomal protein bS20 family.

Functionally, binds directly to 16S ribosomal RNA. This chain is Small ribosomal subunit protein bS20, found in Cutibacterium acnes (strain DSM 16379 / KPA171202) (Propionibacterium acnes).